We begin with the raw amino-acid sequence, 480 residues long: Bindin (480 aa).

Positions 1–20 (MDSQVLPLILLIIVFAASSA) are cleaved as a signal peptide. Residues 21–247 (HGHFPHRTNQ…GEMRAERQRR (227 aa)) constitute a propeptide that is removed on maturation. The tract at residues 161–211 (AEMRHRRSAKDDDVNKRASPRKGSSPAGKKVQIMEQDAGKGDAHNEKEVVK) is disordered. Basic and acidic residues predominate over residues 197 to 211 (DAGKGDAHNEKEVVK). The segment at 377-385 (LRHLRHHSN) is fucose-binding domain. The chain crosses the membrane as a helical span at residues 431–451 (GAGAVAGAAMAAGMPPYPGGA). The interval 452-480 (QGGMRVGGQPQNPMGGNAYNPMTGYRQQG) is disordered.

Belongs to the bindin family.

The protein resides in the cytoplasmic vesicle. Its subcellular location is the secretory vesicle. It localises to the acrosome membrane. Its function is as follows. Species-specific sea urchin sperm protein required for adhesion of sperm to the egg surface during fertilization. Bindin coats the acrosomal process after it is externalized by the acrosome reaction. It binds to sulfated, fucose-containing polysaccharides on the vitelline layer receptor proteoglycans which cover the egg plasma membrane. This Arbacia punctulata (Punctuate sea urchin) protein is Bindin.